We begin with the raw amino-acid sequence, 226 residues long: ATP synthase F(0) complex subunit a (226 aa).

5 helical membrane passes run 5–25 (LFAP…LIII), 68–88 (WSLM…LGML), 97–117 (QLSM…TTGF), 136–156 (FLIP…PVAW), and 189–209 (AFIT…VALI).

Belongs to the ATPase A chain family. In terms of assembly, component of the ATP synthase complex composed at least of ATP5F1A/subunit alpha, ATP5F1B/subunit beta, ATP5MC1/subunit c (homooctomer), MT-ATP6/subunit a, MT-ATP8/subunit 8, ATP5ME/subunit e, ATP5MF/subunit f, ATP5MG/subunit g, ATP5MK/subunit k, ATP5MJ/subunit j, ATP5F1C/subunit gamma, ATP5F1D/subunit delta, ATP5F1E/subunit epsilon, ATP5PF/subunit F6, ATP5PB/subunit b, ATP5PD/subunit d, ATP5PO/subunit OSCP. ATP synthase complex consists of a soluble F(1) head domain (subunits alpha(3) and beta(3)) - the catalytic core - and a membrane F(0) domain - the membrane proton channel (subunits c, a, 8, e, f, g, k and j). These two domains are linked by a central stalk (subunits gamma, delta, and epsilon) rotating inside the F1 region and a stationary peripheral stalk (subunits F6, b, d, and OSCP). Interacts with DNAJC30; interaction is direct.

Its subcellular location is the mitochondrion inner membrane. The catalysed reaction is H(+)(in) = H(+)(out). Subunit a, of the mitochondrial membrane ATP synthase complex (F(1)F(0) ATP synthase or Complex V) that produces ATP from ADP in the presence of a proton gradient across the membrane which is generated by electron transport complexes of the respiratory chain. ATP synthase complex consist of a soluble F(1) head domain - the catalytic core - and a membrane F(1) domain - the membrane proton channel. These two domains are linked by a central stalk rotating inside the F(1) region and a stationary peripheral stalk. During catalysis, ATP synthesis in the catalytic domain of F(1) is coupled via a rotary mechanism of the central stalk subunits to proton translocation. With the subunit c (ATP5MC1), forms the proton-conducting channel in the F(0) domain, that contains two crucial half-channels (inlet and outlet) that facilitate proton movement from the mitochondrial intermembrane space (IMS) into the matrix. Protons are taken up via the inlet half-channel and released through the outlet half-channel, following a Grotthuss mechanism. The protein is ATP synthase F(0) complex subunit a of Balaenoptera physalus (Fin whale).